Consider the following 429-residue polypeptide: 3-phosphoshikimate 1-carboxyvinyltransferase (429 aa).

Residues Lys20, Ser21, and Arg25 each contribute to the 3-phosphoshikimate site. Position 20 (Lys20) interacts with phosphoenolpyruvate. Phosphoenolpyruvate is bound by residues Gly89 and Arg118. Residues Ser164, Ser165, Gln166, Ser192, Asp311, and Lys338 each coordinate 3-phosphoshikimate. A phosphoenolpyruvate-binding site is contributed by Gln166. The Proton acceptor role is filled by Asp311. Phosphoenolpyruvate-binding residues include Arg342 and Arg384.

The protein belongs to the EPSP synthase family. As to quaternary structure, monomer.

Its subcellular location is the cytoplasm. The catalysed reaction is 3-phosphoshikimate + phosphoenolpyruvate = 5-O-(1-carboxyvinyl)-3-phosphoshikimate + phosphate. It participates in metabolic intermediate biosynthesis; chorismate biosynthesis. Its function is as follows. Catalyzes the transfer of the enolpyruvyl moiety of phosphoenolpyruvate (PEP) to the 5-hydroxyl of shikimate-3-phosphate (S3P) to produce enolpyruvyl shikimate-3-phosphate and inorganic phosphate. The protein is 3-phosphoshikimate 1-carboxyvinyltransferase of Methanococcus vannielii (strain ATCC 35089 / DSM 1224 / JCM 13029 / OCM 148 / SB).